The sequence spans 247 residues: Geranylgeranylglyceryl phosphate synthase (247 aa).

Mg(2+) contacts are provided by Asp-23 and Ser-52. Sn-glycerol 1-phosphate is bound by residues 171–177 (YLEAGSG), 203–204 (GG), and 225–226 (GT).

Belongs to the GGGP/HepGP synthase family. Group II subfamily. The cofactor is Mg(2+).

It is found in the cytoplasm. The catalysed reaction is sn-glycerol 1-phosphate + (2E,6E,10E)-geranylgeranyl diphosphate = sn-3-O-(geranylgeranyl)glycerol 1-phosphate + diphosphate. It participates in membrane lipid metabolism; glycerophospholipid metabolism. Prenyltransferase that catalyzes the transfer of the geranylgeranyl moiety of geranylgeranyl diphosphate (GGPP) to the C3 hydroxyl of sn-glycerol-1-phosphate (G1P). This reaction is the first ether-bond-formation step in the biosynthesis of archaeal membrane lipids. This Methanosarcina mazei (strain ATCC BAA-159 / DSM 3647 / Goe1 / Go1 / JCM 11833 / OCM 88) (Methanosarcina frisia) protein is Geranylgeranylglyceryl phosphate synthase.